Here is a 128-residue protein sequence, read N- to C-terminus: Large ribosomal subunit protein bL12 (128 aa).

This sequence belongs to the bacterial ribosomal protein bL12 family. In terms of assembly, homodimer. Part of the ribosomal stalk of the 50S ribosomal subunit. Forms a multimeric L10(L12)X complex, where L10 forms an elongated spine to which 2 to 4 L12 dimers bind in a sequential fashion. Binds GTP-bound translation factors.

In terms of biological role, forms part of the ribosomal stalk which helps the ribosome interact with GTP-bound translation factors. Is thus essential for accurate translation. This chain is Large ribosomal subunit protein bL12, found in Corynebacterium jeikeium (strain K411).